A 723-amino-acid chain; its full sequence is Threonine--tRNA ligase 1, cytoplasmic (723 aa).

The interval 1–46 is disordered; the sequence is MFEEKASSPSGKMGGEEKPIGAGEEKQKEGGKKKNKEGSGDGGRAE. A compositionally biased stretch (basic and acidic residues) spans 14-39; it reads GGEEKPIGAGEEKQKEGGKKKNKEGS. Position 39 is a phosphoserine (S39). The region spanning 79 to 143 is the TGS domain; that stretch reads DSKPIKVTLP…EEDCTLELLK (65 aa). An N6-acetyllysine modification is found at K243. T246 bears the Phosphothreonine mark. The residue at position 298 (Y298) is a Phosphotyrosine. T453 is subject to Phosphothreonine. S702 carries the phosphoserine modification.

Belongs to the class-II aminoacyl-tRNA synthetase family. Homodimer. In terms of processing, ISGylated.

The protein localises to the cytoplasm. The catalysed reaction is tRNA(Thr) + L-threonine + ATP = L-threonyl-tRNA(Thr) + AMP + diphosphate + H(+). With respect to regulation, inhibited by borrelidin (BN, IC 50 is 7 nM), which binds to 4 distinct subsites in the protein, preventing binding of all 3 substrates. Catalyzes the attachment of threonine to tRNA(Thr) in a two-step reaction: threonine is first activated by ATP to form Thr-AMP and then transferred to the acceptor end of tRNA(Thr). Also edits incorrectly charged tRNA(Thr) via its editing domain, at the post-transfer stage. In Homo sapiens (Human), this protein is Threonine--tRNA ligase 1, cytoplasmic.